The following is a 166-amino-acid chain: Lipoprotein signal peptidase (166 aa).

Transmembrane regions (helical) follow at residues 9-29, 45-65, 71-91, and 100-120; these read ASGA…FDQL, ALTS…FGFL, WQRW…CFLL, and FSLS…DRLV. Residues aspartate 126 and aspartate 144 contribute to the active site. A helical membrane pass occupies residues 135–155; sequence WHFPAFNLADSAITVGAVLLV.

Belongs to the peptidase A8 family.

The protein localises to the cell inner membrane. It catalyses the reaction Release of signal peptides from bacterial membrane prolipoproteins. Hydrolyzes -Xaa-Yaa-Zaa-|-(S,diacylglyceryl)Cys-, in which Xaa is hydrophobic (preferably Leu), and Yaa (Ala or Ser) and Zaa (Gly or Ala) have small, neutral side chains.. The protein operates within protein modification; lipoprotein biosynthesis (signal peptide cleavage). In terms of biological role, this protein specifically catalyzes the removal of signal peptides from prolipoproteins. The polypeptide is Lipoprotein signal peptidase (Burkholderia ambifaria (strain MC40-6)).